Here is a 181-residue protein sequence, read N- to C-terminus: Large ribosomal subunit protein uL16 (181 aa).

Belongs to the universal ribosomal protein uL16 family.

The protein is Large ribosomal subunit protein uL16 of Pyrococcus abyssi (strain GE5 / Orsay).